The primary structure comprises 132 residues: Fluoride-specific ion channel FluC (132 aa).

A run of 4 helical transmembrane segments spans residues 6–26 (VLQLIAVGFGGALGAMARFIV), 41–61 (GTLVVNSLGSFAIGLIMILMI), 73–93 (FLIVGFLGAFTTFSTFSFETY), and 104–124 (AMLNIGVSVLTGLFAVWLGIW). Residues Gly80 and Thr83 each coordinate Na(+).

It belongs to the fluoride channel Fluc/FEX (TC 1.A.43) family.

The protein localises to the cell inner membrane. The enzyme catalyses fluoride(in) = fluoride(out). With respect to regulation, na(+) is not transported, but it plays an essential structural role and its presence is essential for fluoride channel function. Functionally, fluoride-specific ion channel. Important for reducing fluoride concentration in the cell, thus reducing its toxicity. In Hydrogenovibrio crunogenus (strain DSM 25203 / XCL-2) (Thiomicrospira crunogena), this protein is Fluoride-specific ion channel FluC.